A 356-amino-acid chain; its full sequence is Trans-enoyl reductase pgmF (356 aa).

NADP(+) is bound by residues 57-60 (VDFK), 175-178 (SGGC), 198-201 (STPN), Y216, 261-262 (VG), and 342-343 (AK).

This sequence belongs to the zinc-containing alcohol dehydrogenase family.

FAD-linked oxidoreductase; part of the gene cluster that mediates the biosynthesis of pleosporalin A, ascomycone A, as well as a third cryptic naphthoquinone derived pigment, all responsible for the coloration of conidia. The pathway begins with the biosynthesis of the cyclized heptaketide 3-acetonyl-1,6,8-trihydroxy-2-naphthaldehyde by the NR-PKS pgmA. The C-6 hydroxyl group is further methylated by the O-methyltransferase pgmB to yield fusarubinaldehyde which is in turn oxidized by the cytochrome P450 monooxygenase pgmC at C-9. The C-1 hydroxyl group is then methylated spontaneously. Although pgmE, pgmD and pgmH are essential for the production of pleosporalin A, it is not the case for the 2 other final products and it remains difficult to assign a specific function to each enzyme. PgmF and pgmG seem not to be involved in pigment biosynthesis although they were regulated by the cluster-specific transcription factor pgmR. In Aspergillus terreus (strain NIH 2624 / FGSC A1156), this protein is Trans-enoyl reductase pgmF.